A 437-amino-acid chain; its full sequence is Phosphomethylpyrimidine synthase (437 aa).

Substrate is bound by residues asparagine 69, methionine 98, tyrosine 127, histidine 163, 185–187 (SRG), 226–229 (DACR), and glutamate 265. A Zn(2+)-binding site is contributed by histidine 269. Residue tyrosine 292 coordinates substrate. Histidine 333 serves as a coordination point for Zn(2+). Cysteine 409, cysteine 412, and cysteine 416 together coordinate [4Fe-4S] cluster.

It belongs to the ThiC family. [4Fe-4S] cluster serves as cofactor.

It carries out the reaction 5-amino-1-(5-phospho-beta-D-ribosyl)imidazole + S-adenosyl-L-methionine = 4-amino-2-methyl-5-(phosphooxymethyl)pyrimidine + CO + 5'-deoxyadenosine + formate + L-methionine + 3 H(+). It participates in cofactor biosynthesis; thiamine diphosphate biosynthesis. Its function is as follows. Catalyzes the synthesis of the hydroxymethylpyrimidine phosphate (HMP-P) moiety of thiamine from aminoimidazole ribotide (AIR) in a radical S-adenosyl-L-methionine (SAM)-dependent reaction. The chain is Phosphomethylpyrimidine synthase from Clostridium botulinum (strain Kyoto / Type A2).